The chain runs to 150 residues: FAD synthase (150 aa).

ATP is bound by residues 11 to 12 (TF), 16 to 19 (HPGH), aspartate 96, and tyrosine 124.

This sequence belongs to the archaeal FAD synthase family. As to quaternary structure, homodimer. The cofactor is a divalent metal cation.

The catalysed reaction is FMN + ATP + H(+) = FAD + diphosphate. It participates in cofactor biosynthesis; FAD biosynthesis; FAD from FMN: step 1/1. In terms of biological role, catalyzes the transfer of the AMP portion of ATP to flavin mononucleotide (FMN) to produce flavin adenine dinucleotide (FAD) coenzyme. The chain is FAD synthase from Methanococcus maripaludis (strain C7 / ATCC BAA-1331).